The chain runs to 536 residues: 2-isopropylmalate synthase (536 aa).

The 266-residue stretch at 8 to 273 (VLIFDTTLRD…FFGRDPESPT (266 aa)) folds into the Pyruvate carboxyltransferase domain. Aspartate 17, histidine 208, histidine 210, and asparagine 244 together coordinate Mn(2+). Residues 408–536 (QLQLVQVSCG…PQHDLIKANL (129 aa)) are regulatory domain.

The protein belongs to the alpha-IPM synthase/homocitrate synthase family. LeuA type 1 subfamily. Homodimer. It depends on Mn(2+) as a cofactor.

The protein resides in the cytoplasm. It catalyses the reaction 3-methyl-2-oxobutanoate + acetyl-CoA + H2O = (2S)-2-isopropylmalate + CoA + H(+). It functions in the pathway amino-acid biosynthesis; L-leucine biosynthesis; L-leucine from 3-methyl-2-oxobutanoate: step 1/4. Its function is as follows. Catalyzes the condensation of the acetyl group of acetyl-CoA with 3-methyl-2-oxobutanoate (2-ketoisovalerate) to form 3-carboxy-3-hydroxy-4-methylpentanoate (2-isopropylmalate). The sequence is that of 2-isopropylmalate synthase from Prochlorococcus marinus (strain MIT 9211).